Here is a 472-residue protein sequence, read N- to C-terminus: Flap endonuclease 1 (472 aa).

Positions 1-106 are N-domain; the sequence is MGIKGLARFL…EELMKRKERR (106 aa). A Mg(2+)-binding site is contributed by Asp-34. DNA is bound by residues Arg-47 and Arg-72. Positions 88, 160, 162, 181, and 183 each coordinate Mg(2+). An I-domain region spans residues 124 to 263; sequence TIRKQLIRTI…LTAYKLLKKH (140 aa). Residue Glu-160 coordinates DNA. Positions 241 and 243 each coordinate DNA. Asp-243 serves as a coordination point for Mg(2+). Residues 348–356 form an interaction with PCNA region; the sequence is AQTSLDSFF.

It belongs to the XPG/RAD2 endonuclease family. FEN1 subfamily. Interacts with PCNA. Three molecules of FEN1 bind to one PCNA trimer with each molecule binding to one PCNA monomer. PCNA stimulates the nuclease activity without altering cleavage specificity. The cofactor is Mg(2+). Post-translationally, phosphorylated. Phosphorylation upon DNA damage induces relocalization to the nuclear plasma.

The protein localises to the nucleus. Its subcellular location is the nucleolus. It localises to the nucleoplasm. The protein resides in the mitochondrion. Its function is as follows. Structure-specific nuclease with 5'-flap endonuclease and 5'-3' exonuclease activities involved in DNA replication and repair. During DNA replication, cleaves the 5'-overhanging flap structure that is generated by displacement synthesis when DNA polymerase encounters the 5'-end of a downstream Okazaki fragment. It enters the flap from the 5'-end and then tracks to cleave the flap base, leaving a nick for ligation. Also involved in the long patch base excision repair (LP-BER) pathway, by cleaving within the apurinic/apyrimidinic (AP) site-terminated flap. Acts as a genome stabilization factor that prevents flaps from equilibrating into structures that lead to duplications and deletions. Also possesses 5'-3' exonuclease activity on nicked or gapped double-stranded DNA, and exhibits RNase H activity. Also involved in replication and repair of rDNA and in repairing mitochondrial DNA. This Cryptosporidium muris (strain RN66) protein is Flap endonuclease 1.